Here is a 459-residue protein sequence, read N- to C-terminus: Glycosyl hydrolase family 109 protein (459 aa).

Residues 1 to 31 (MHNIHRRNFLKAAGAATAGLVTANIALNAYA) constitute a signal peptide (tat-type signal). NAD(+) contacts are provided by residues 64–65 (ER), aspartate 86, 135–138 (WEWH), 155–156 (EV), and asparagine 184. Residues tyrosine 213, arginine 232, 244 to 247 (YPTH), and tyrosine 326 contribute to the substrate site. An NAD(+)-binding site is contributed by tyrosine 244.

It belongs to the Gfo/Idh/MocA family. Glycosyl hydrolase 109 subfamily. It depends on NAD(+) as a cofactor. In terms of processing, predicted to be exported by the Tat system. The position of the signal peptide cleavage has not been experimentally proven.

Glycosidase. This Shewanella baltica (strain OS155 / ATCC BAA-1091) protein is Glycosyl hydrolase family 109 protein.